The chain runs to 871 residues: Probable LRR receptor-like serine/threonine-protein kinase At1g51810 (871 aa).

The first 20 residues, 1-20 (MERHCLFFVIFSLILHLVQA), serve as a signal peptide directing secretion. Over 21–512 (QDPIGFINLD…GRQIKSMTIP (492 aa)) the chain is Extracellular. N-linked (GlcNAc...) asparagine glycans are attached at residues Asn-93, Asn-179, Asn-229, Asn-283, Asn-295, Asn-396, Asn-410, Asn-439, Asn-458, Asn-463, and Asn-489. 3 LRR repeats span residues 405 to 426 (IITSLNLSSSGLTGIIVLTIQN), 429 to 449 (NLQELDLSNNNLSGGVPEFLA), and 453 to 474 (SLLVINLSGNNLSGVVPQKLIE). A helical transmembrane segment spans residues 513 to 533 (IVASIGSVVAFTVALMIFCVV). Over 534 to 871 (RKNNPSNDEA…FGTEVAPMAR (338 aa)) the chain is Cytoplasmic. Thr-568 bears the Phosphothreonine mark. The Protein kinase domain maps to 577 to 850 (NNFQKILGKG…QVVFELKECL (274 aa)). ATP-binding positions include 583-591 (LGKGGFGIV) and Lys-605. Tyr-650 bears the Phosphotyrosine mark. Asp-702 (proton acceptor) is an active-site residue. Residue Ser-736 is modified to Phosphoserine. Phosphothreonine occurs at positions 737 and 742. The residue at position 750 (Tyr-750) is a Phosphotyrosine.

It belongs to the protein kinase superfamily. Ser/Thr protein kinase family.

It localises to the membrane. It catalyses the reaction L-seryl-[protein] + ATP = O-phospho-L-seryl-[protein] + ADP + H(+). It carries out the reaction L-threonyl-[protein] + ATP = O-phospho-L-threonyl-[protein] + ADP + H(+). This chain is Probable LRR receptor-like serine/threonine-protein kinase At1g51810, found in Arabidopsis thaliana (Mouse-ear cress).